The chain runs to 492 residues: MDPYKHRPSSAFNSPFWTTNSGAPVWNNNSSLTVGPRGQYLLEDYHLVEKLANFDRERIPERVVHARGASAKGFFEVTHDISHLTCADFLRAPGVQTPVIVRFSTVIHERGSPETLRDPRGFAVKFYTREGNFDLVGNNFPVFFIRDGMKFPDMVHALKPNPKSHIQENWRILDFFSHHPESLHMFTFLFDDLGVPQDYRHMEGSGVNTYTLINKAGKAHYVKFHWKPTCGVKCLLEDEAIKVGGANHSHATQDLYDSIAAGNYPEWKLFIQTIDPDHEDKFDFDPLDVTKTWPEDILPLQPVGRLVLNKNIDNFFAENEQLAFCPAIVVPGIYYSDDKLLQTRIFSYSDTQRHRLGPNYLQLPANAPKCAHHNNHHEGFMNFMHRDEEINYFPSRYDPVRHAEMFPIPPAVCTGRREKCIIEKENNFKQPGERYRSWAADRQERFICRWVDALSDPRVTHEIRSIWISYWSQADKSVGQKLASLLNVRPSI.

Catalysis depends on residues His-65 and Asn-138. Tyr-348 serves as a coordination point for heme.

It belongs to the catalase family. Homotetramer. The cofactor is heme.

The protein resides in the peroxisome. It carries out the reaction 2 H2O2 = O2 + 2 H2O. Functionally, occurs in almost all aerobically respiring organisms and serves to protect cells from the toxic effects of hydrogen peroxide. This chain is Catalase isozyme 1 (CAT1), found in Gossypium hirsutum (Upland cotton).